The primary structure comprises 491 residues: MKNWKKYAFASASVVALAAGLAACGNLTGNSKKAADSGDKPVIKMYQIGDKPDNLDELLANANKIIEEKVGAKLDIQYLGWGDYGKKMSVITSSGENYDIAFADNYIVNAQKGAYADLTELYKKEGKDLYKALDPAYIKGNTVNGKIYAVPVAANVASSQNFAFNGTLLAKYGIDISGVTSYETLEPVLKQIKEKAPDVVPFAIGKVFIPSDNFDYPVANGLPFVIDLEGDTTKVVNRYEVPRFKEHLKTLHKFYEAGYIPKDVATSDTSFDLQQDTWFVREETVGPADYGNSLLSRVANKDIQIKPITNFIKKNQTTQVANFVISNNSKNKEKSMEILNLLNTNPELLNGLVYGPEGKNWEKIEGKENRVRVLDGYKGNTHMGGWNTGNNWILYINENVTDQQIENSKKELAEAKESPALGFIFNTDNVKSEISAIANTMQQFDTAINTGTVDPDKAIPELMEKLKSEGAYEKVLNEMQKQYDEFLKNKK.

Residues Asp-212, His-247, His-252, and Glu-256 each contribute to the Zn(2+) site.

Belongs to the bacterial solute-binding protein 1 family. In terms of assembly, exists as a monomer, homodimer, homotrimer and homotetramer; oligomerization increases with higher protein concentration.

Its subcellular location is the cell surface. Its function is as follows. Probably part of an ABC transporter complex involved in carbohydrate transport. The protein is Carbohydrate ABC transporter substrate-binding protein of Streptococcus pneumoniae serotype 4 (strain ATCC BAA-334 / TIGR4).